We begin with the raw amino-acid sequence, 236 residues long: MGQKINPIGLRLGVNRTWDSRWYADSGEYGRLLHEDLSIRLYVLEELKQAAISKVIIERPHKKCRVTIYSARPGLIIGKKGADIEKLRRKLSEMTNAETSLNIVEIHKPEIDATIIAQSIAQQLERRVAFRRAMKRAVQSAMRLGAEGIRINCSGRLGGAEIARMEWYREGRVPLHTLRSDVDYGTAEAKTAYGICGVKVWVFKGEILEYDPIASERRSVEIDHSGSSSNRRRENA.

Residues 39–107 (IRLYVLEELK…ETSLNIVEIH (69 aa)) form the KH type-2 domain.

This sequence belongs to the universal ribosomal protein uS3 family. In terms of assembly, part of the 30S ribosomal subunit. Forms a tight complex with proteins S10 and S14.

Binds the lower part of the 30S subunit head. Binds mRNA in the 70S ribosome, positioning it for translation. In Bartonella quintana (strain Toulouse) (Rochalimaea quintana), this protein is Small ribosomal subunit protein uS3.